Reading from the N-terminus, the 208-residue chain is Redox-sensing transcriptional repressor Rex (208 aa).

The H-T-H motif DNA-binding region spans 16-55 (VYSRYLENLYRKGITTVSSADIAQGVGVTSAQVRKDLAYF). An NAD(+)-binding site is contributed by 90–95 (GAGNLG).

It belongs to the transcriptional regulatory Rex family. As to quaternary structure, homodimer.

It is found in the cytoplasm. Its function is as follows. Modulates transcription in response to changes in cellular NADH/NAD(+) redox state. The chain is Redox-sensing transcriptional repressor Rex from Carboxydothermus hydrogenoformans (strain ATCC BAA-161 / DSM 6008 / Z-2901).